A 132-amino-acid polypeptide reads, in one-letter code: MQTTFTELMQQLFLKLGLNHQVNENDVYTFTFEVDGHIQVLIACYHQQWVQLFSELGADLPTNDNLFGEHWPAHVQGRLDGKPILWSQQSLVGLDIDEMQAWLERFIDDIEQRKEPQNTKFQPNSTSPILFI.

Binds to YopT.

Functions as a specific chaperone for YopT. The sequence is that of Chaperone protein SycT (sycT) from Yersinia pestis.